A 169-amino-acid polypeptide reads, in one-letter code: S-ribosylhomocysteine lyase (169 aa).

Residues H54, H58, and C128 each contribute to the Fe cation site.

The protein belongs to the LuxS family. As to quaternary structure, homodimer. Fe cation is required as a cofactor.

It carries out the reaction S-(5-deoxy-D-ribos-5-yl)-L-homocysteine = (S)-4,5-dihydroxypentane-2,3-dione + L-homocysteine. Its function is as follows. Involved in the synthesis of autoinducer 2 (AI-2) which is secreted by bacteria and is used to communicate both the cell density and the metabolic potential of the environment. The regulation of gene expression in response to changes in cell density is called quorum sensing. Catalyzes the transformation of S-ribosylhomocysteine (RHC) to homocysteine (HC) and 4,5-dihydroxy-2,3-pentadione (DPD). In Psychromonas ingrahamii (strain DSM 17664 / CCUG 51855 / 37), this protein is S-ribosylhomocysteine lyase.